A 199-amino-acid chain; its full sequence is Holliday junction branch migration complex subunit RuvA (199 aa).

The tract at residues 1-64 (MFAYIKGTVE…EDIAVLYGFG (64 aa)) is domain I. The interval 65-143 (TVEELTMFEM…KEQLTSSIPM (79 aa)) is domain II. The tract at residues 144-151 (TSPENNEV) is flexible linker. The segment at 152-199 (TGDSVLSEAVSALMVLGYGSAEASSTISGIYEKGISVEELVKKALKSL) is domain III.

Belongs to the RuvA family. Homotetramer. Forms an RuvA(8)-RuvB(12)-Holliday junction (HJ) complex. HJ DNA is sandwiched between 2 RuvA tetramers; dsDNA enters through RuvA and exits via RuvB. An RuvB hexamer assembles on each DNA strand where it exits the tetramer. Each RuvB hexamer is contacted by two RuvA subunits (via domain III) on 2 adjacent RuvB subunits; this complex drives branch migration. In the full resolvosome a probable DNA-RuvA(4)-RuvB(12)-RuvC(2) complex forms which resolves the HJ.

The protein resides in the cytoplasm. Its function is as follows. The RuvA-RuvB-RuvC complex processes Holliday junction (HJ) DNA during genetic recombination and DNA repair, while the RuvA-RuvB complex plays an important role in the rescue of blocked DNA replication forks via replication fork reversal (RFR). RuvA specifically binds to HJ cruciform DNA, conferring on it an open structure. The RuvB hexamer acts as an ATP-dependent pump, pulling dsDNA into and through the RuvAB complex. HJ branch migration allows RuvC to scan DNA until it finds its consensus sequence, where it cleaves and resolves the cruciform DNA. The chain is Holliday junction branch migration complex subunit RuvA from Ruminiclostridium cellulolyticum (strain ATCC 35319 / DSM 5812 / JCM 6584 / H10) (Clostridium cellulolyticum).